A 262-amino-acid polypeptide reads, in one-letter code: Pyridoxine 5'-phosphate synthase (262 aa).

Residue asparagine 6 participates in 3-amino-2-oxopropyl phosphate binding. A 1-deoxy-D-xylulose 5-phosphate-binding site is contributed by 8 to 9 (DH). Arginine 17 provides a ligand contact to 3-amino-2-oxopropyl phosphate. Histidine 43 acts as the Proton acceptor in catalysis. Residues arginine 45 and histidine 50 each contribute to the 1-deoxy-D-xylulose 5-phosphate site. Catalysis depends on glutamate 70, which acts as the Proton acceptor. Threonine 102 contacts 1-deoxy-D-xylulose 5-phosphate. Residue histidine 215 is the Proton donor of the active site. Residues glycine 216 and 237–238 (GH) contribute to the 3-amino-2-oxopropyl phosphate site.

It belongs to the PNP synthase family. Homooctamer; tetramer of dimers.

The protein resides in the cytoplasm. It carries out the reaction 3-amino-2-oxopropyl phosphate + 1-deoxy-D-xylulose 5-phosphate = pyridoxine 5'-phosphate + phosphate + 2 H2O + H(+). It participates in cofactor biosynthesis; pyridoxine 5'-phosphate biosynthesis; pyridoxine 5'-phosphate from D-erythrose 4-phosphate: step 5/5. Its function is as follows. Catalyzes the complicated ring closure reaction between the two acyclic compounds 1-deoxy-D-xylulose-5-phosphate (DXP) and 3-amino-2-oxopropyl phosphate (1-amino-acetone-3-phosphate or AAP) to form pyridoxine 5'-phosphate (PNP) and inorganic phosphate. The sequence is that of Pyridoxine 5'-phosphate synthase from Helicobacter pylori (strain P12).